A 233-amino-acid polypeptide reads, in one-letter code: MLTYDTWEEPAITFPEDDSYKGALSVLKWAYGHYGDQLVYACSFGIEGIVLIDLISKVKKDAEIVFLDTGLHFKETYETIEKVKERYPGLNIILKKPSLTLEEQAEAHGDKLWEREPNQCCYIRKILPLREALAGHPAWLSGLRRDQGPSRANTNFLNKDDKFQSIKVCPLIHWTWKDIWRYTSKHELDYNILHDQGYPSIGCEPCTSPAFTAEDLRSGRWNGMAKTECGLHE.

[4Fe-4S] cluster contacts are provided by Cys-120, Cys-121, Cys-203, and Cys-206. Cys-229 (nucleophile; cysteine thiosulfonate intermediate) is an active-site residue.

This sequence belongs to the PAPS reductase family. CysH subfamily. [4Fe-4S] cluster serves as cofactor.

It is found in the cytoplasm. The enzyme catalyses [thioredoxin]-disulfide + sulfite + AMP + 2 H(+) = adenosine 5'-phosphosulfate + [thioredoxin]-dithiol. Its pathway is sulfur metabolism; hydrogen sulfide biosynthesis; sulfite from sulfate. In terms of biological role, catalyzes the formation of sulfite from adenosine 5'-phosphosulfate (APS) using thioredoxin as an electron donor. In Bacillus velezensis (strain DSM 23117 / BGSC 10A6 / LMG 26770 / FZB42) (Bacillus amyloliquefaciens subsp. plantarum), this protein is Adenosine 5'-phosphosulfate reductase.